Consider the following 1168-residue polypeptide: Transcription-repair-coupling factor (1168 aa).

A Helicase ATP-binding domain is found at 633–794 (DMQKSRPMDR…MLGVRDLSVI (162 aa)). Position 646–653 (646–653 (GDVGYGKT)) interacts with ATP. The DEEQ box motif lies at 747–750 (DEEQ). Residues 808 to 969 (VLEQNMSFIK…GFKIAMRDLN (162 aa)) form the Helicase C-terminal domain.

This sequence in the N-terminal section; belongs to the UvrB family. It in the C-terminal section; belongs to the helicase family. RecG subfamily.

The protein resides in the cytoplasm. Couples transcription and DNA repair by recognizing RNA polymerase (RNAP) stalled at DNA lesions. Mediates ATP-dependent release of RNAP and its truncated transcript from the DNA, and recruitment of nucleotide excision repair machinery to the damaged site. This chain is Transcription-repair-coupling factor, found in Staphylococcus aureus (strain Mu50 / ATCC 700699).